The following is a 290-amino-acid chain: Signal peptidase I (290 aa).

The Cytoplasmic portion of the chain corresponds to M1–S13. The chain crosses the membrane as a helical span at residues W14–I34. Residues P35–H290 are Extracellular-facing. Active-site residues include S38 and K106.

This sequence belongs to the peptidase S26 family.

It localises to the cell membrane. It catalyses the reaction Cleavage of hydrophobic, N-terminal signal or leader sequences from secreted and periplasmic proteins.. The polypeptide is Signal peptidase I (lepB) (Helicobacter pylori (strain J99 / ATCC 700824) (Campylobacter pylori J99)).